A 342-amino-acid chain; its full sequence is Ribosomal RNA small subunit methyltransferase H (342 aa).

S-adenosyl-L-methionine-binding positions include Gly-43–Tyr-45, Asp-61, Phe-87, Asp-108, and Gln-115. The segment at Ala-322–Arg-342 is disordered.

It belongs to the methyltransferase superfamily. RsmH family.

Its subcellular location is the cytoplasm. It carries out the reaction cytidine(1402) in 16S rRNA + S-adenosyl-L-methionine = N(4)-methylcytidine(1402) in 16S rRNA + S-adenosyl-L-homocysteine + H(+). Functionally, specifically methylates the N4 position of cytidine in position 1402 (C1402) of 16S rRNA. The sequence is that of Ribosomal RNA small subunit methyltransferase H from Hyphomonas neptunium (strain ATCC 15444).